We begin with the raw amino-acid sequence, 569 residues long: Ribosome-inactivating protein SNAI' (569 aa).

The N-terminal stretch at M1–S28 is a signal peptide. N-linked (GlcNAc...) asparagine glycosylation is present at N40. Residue E201 is part of the active site. 3 disulfide bridges follow: C286/C311, C328/C347, and C369/C381. Ricin B-type lectin domains follow at residues E315–G435 and V437–S565. The 1-alpha repeat unit spans residues D325–S365. One copy of the 1-beta repeat lies at L366 to N401. A 1-gamma repeat occupies S404 to N436. A 2-alpha repeat occupies E448–V488. Intrachain disulfides connect C451–C466 and C495–C512. The stretch at R492–N530 is one 2-beta repeat. Residues S533–T566 form a 2-gamma repeat.

The protein in the N-terminal section; belongs to the ribosome-inactivating protein family. Type 2 RIP subfamily. In terms of assembly, disulfide-linked dimer of A and B chains.

The enzyme catalyses Endohydrolysis of the N-glycosidic bond at one specific adenosine on the 28S rRNA.. Its function is as follows. The A chain is responsible for inhibiting protein synthesis through the catalytic inactivation of 60S ribosomal subunits by removing adenine from position 4,324 of 28S rRNA. The B chain binds to cell receptors and probably facilitates the entry into the cell of the A chain; B chains are also responsible for cell agglutination (lectin activity). Agglutination is inhibited by Neu5Ac(alpha2,6)lactose, and N-linked glycoproteins such as fetuin and orosomucoid. This is Ribosome-inactivating protein SNAI' from Sambucus nigra (European elder).